Consider the following 490-residue polypeptide: Selenium-binding protein 1 (490 aa).

A2 is modified (N-acetylalanine). Selenite-binding residues include C21 and C22.

It belongs to the selenium-binding protein family. As to quaternary structure, interacts with GRXS14 and GRXS16. Interacts with DALL3. As to expression, expressed in seedlings, roots, leaves, stems and flowers.

Functionally, binds cadmium and mediates lower sensitivity to stress requiring glutathione (GSH) for tolerance (e.g. cadmium, selenate, and hydrogen peroxide excess). Probably helps to detoxify cadmium potentially through direct binding. Binds selenium, cadmium, zinc and nickel in vitro. The chain is Selenium-binding protein 1 from Arabidopsis thaliana (Mouse-ear cress).